Reading from the N-terminus, the 1413-residue chain is ABC-type transporter vrcC (1413 aa).

In terms of domain architecture, ABC transporter 1 spans 108–365 (VWFEALALAR…FLDMGFACPE (258 aa)). A glycan (N-linked (GlcNAc...) asparagine) is linked at Asn-289. A helical membrane pass occupies residues 476–496 (VTISSLIGNVITALVIASIFY). Residue Asn-501 is glycosylated (N-linked (GlcNAc...) asparagine). Transmembrane regions (helical) follow at residues 510 to 530 (ALLF…MLTL) and 564 to 584 (VLNA…VLLG). A glycan (N-linked (GlcNAc...) asparagine) is linked at Asn-675. A helical transmembrane segment spans residues 683 to 703 (IGIILAFMVVLGAIYLVATDF). Positions 725-748 (SGKPDDFEGGSDRNASQEKSKSDR) are disordered. Asn-738 carries N-linked (GlcNAc...) asparagine glycosylation. Residues 739–748 (ASQEKSKSDR) are compositionally biased toward basic and acidic residues. The 243-residue stretch at 761-1003 (FQWQDVCFDI…ILIDYFVRNG (243 aa)) folds into the ABC transporter 2 domain. 6 consecutive transmembrane segments (helical) span residues 1105–1125 (IYIY…GFSL), 1142–1162 (IFLL…HFVT), 1191–1211 (LFWN…PIGM), 1230–1250 (LLIW…IAAL), 1266–1286 (LCLL…FWIF), and 1290–1310 (VSPF…DTTV). N-linked (GlcNAc...) asparagine glycosylation occurs at Asn-1324. Residues 1378–1398 (FGLMWVFIFTNIVAACLLYWW) traverse the membrane as a helical segment.

This sequence belongs to the ABC transporter superfamily. ABCG family. PDR (TC 3.A.1.205) subfamily.

It is found in the cell membrane. Its function is as follows. ABC-type transporter; part of the gene cluster that mediates the biosynthesis of the sesterterpene variecolin. VrcC is probably involved in the secretion of variecolin. This Aspergillus aculeatus (strain ATCC 16872 / CBS 172.66 / WB 5094) protein is ABC-type transporter vrcC.